Consider the following 137-residue polypeptide: Protein cornichon homolog 3 (137 aa).

3 consecutive transmembrane segments (helical) span residues Ile-8–Leu-28, Ile-54–Leu-74, and Leu-113–Asp-133.

The protein belongs to the cornichon family.

The protein localises to the membrane. The chain is Protein cornichon homolog 3 from Arabidopsis thaliana (Mouse-ear cress).